Here is a 2087-residue protein sequence, read N- to C-terminus: Rho GTPase-activating protein 32 (2087 aa).

Positions 131-245 (GSIQLSLSEE…LTWMEIDNKG (115 aa)) constitute a PX; atypical domain. The 63-residue stretch at 259–321 (PAVGAAHVIK…PGHCVELINQ (63 aa)) folds into the SH3 domain. A Rho-GAP domain is found at 372 to 567 (CDLGEHLLNS…FILNHVDVLF (196 aa)). Phosphoserine occurs at positions 706, 709, 732, and 738. Residues 818-858 (FLDSPGYSKDKPSANKKDAETGSSQCQTPGSTASSEPVSPL) form a disordered region. Over residues 825 to 837 (SKDKPSANKKDAE) the composition is skewed to basic and acidic residues. Polar residues predominate over residues 838 to 854 (TGSSQCQTPGSTASSEP). S852, S856, and S892 each carry phosphoserine. Residues 927–938 (SNTTAQNASSST) are compositionally biased toward low complexity. 3 disordered regions span residues 927-1038 (SNTT…PPKN), 1103-1143 (PAEQ…EQHH), and 1169-1257 (VPLD…ENTS). S952 is subject to Phosphoserine. Low complexity-rich tracts occupy residues 994–1005 (SVSSSQSKAVAS) and 1019–1029 (QDSVPVSSVSL). The span at 1124-1138 (TTATGDPTHSNTTES) shows a compositional bias: polar residues. Over residues 1172–1182 (DSEKSDDHVSF) the composition is skewed to basic and acidic residues. Over residues 1188–1203 (GKNSMPTVSFLDQDQS) the composition is skewed to polar residues. At S1203 the chain carries Phosphoserine. Basic and acidic residues predominate over residues 1222 to 1232 (DKLHHPLEFAD). The interaction with GAB2 stretch occupies residues 1391–1711 (RVPLLHLRAE…YSYAGLAPRP (321 aa)). 2 positions are modified to asymmetric dimethylarginine: R1523 and R1533. A Phosphoserine modification is found at S1585. The interval 1685 to 2087 (PNRDFAFYNP…QHPETQIHAE (403 aa)) is interaction with FYN. Positions 1798 to 1896 (PGKTGLLSVA…QFCESKNGPP (99 aa)) are disordered. Positions 1823–1838 (GEDRFYRRHPEAEMDR) are enriched in basic and acidic residues. Polar residues predominate over residues 1847–1862 (STQPEKPSLPQKQSSL). Residues 1875–1889 (PEHRAHQEASHRQFC) show a composition bias toward basic and acidic residues. R2037 is modified (omega-N-methylarginine).

It belongs to the PX domain-containing GAP family. In terms of assembly, interacts with NTRK1 (via cytoplasmic domain); the interaction is independent of the phosphorylation state of NTRK1. Interacts with SHC3 (via SH2 domain). Interacts with RASA1 (via SH3 domain); the interaction is necessary for the Ras activation and cell transforming activities of ARHGAP32. Interacts with GAB1 and GAB2. Interacts with CRK and CRKL. Found in a complex with CRKL and BCAR1; upon EGF stimulation BCAR1 may be replaced by EGFR. Interacts with NCK1 (via SH3 domain); NCK1 recruits phosphorylated BCAR1 to the complex. Isoform 2 interacts with FYN; the interaction appears to be dependent on tyrosine phosphorylation of ARHGAP32. Interacts with EGFR; the interaction requires EGF stimulation and is increased by SHC3. Interacts with CDC42; the interaction requires constitutively active CDC42. Interacts with CTNNB1. Interacts with GRIN2B. Interacts with DLG4 and CDH2. Interacts with GPHN. In terms of processing, isoform 2 is phosphorylated on multiple tyrosine residues by FYN. Phosphorylated tyrosine residues undergo dephosphorylation after stimulation of NMDA receptors. Phosphorylated in vitro by CaMK2 in the presence of calmodulin and calcium; which inhibits GAP activity. Isoform 1 and isoform 2 are highly expressed in brain and testis. Isoform 1 is also expressed in other tissues such as lung, liver and spleen.

The protein localises to the postsynaptic density. Its subcellular location is the cell projection. It is found in the dendritic spine. The protein resides in the cytoplasm. It localises to the cell cortex. The protein localises to the endosome membrane. Its subcellular location is the golgi apparatus membrane. It is found in the endoplasmic reticulum membrane. The protein resides in the membrane. Functionally, GTPase-activating protein (GAP) promoting GTP hydrolysis on RHOA, CDC42 and RAC1 small GTPases. May be involved in the differentiation of neuronal cells during the formation of neurite extensions. Involved in NMDA receptor activity-dependent actin reorganization in dendritic spines. May mediate cross-talks between Ras- and Rho-regulated signaling pathways in cell growth regulation. Isoform 2 has higher GAP activity. The chain is Rho GTPase-activating protein 32 (ARHGAP32) from Homo sapiens (Human).